Consider the following 271-residue polypeptide: 3-methyl-2-oxobutanoate hydroxymethyltransferase 1 (271 aa).

Positions 53 and 92 each coordinate Mg(2+). 3-methyl-2-oxobutanoate is bound by residues 53–54 (DS), aspartate 92, and lysine 120. Mg(2+) is bound at residue glutamate 122. Residue glutamate 189 is the Proton acceptor of the active site.

This sequence belongs to the PanB family. Homodecamer; pentamer of dimers. Mg(2+) serves as cofactor.

The protein resides in the cytoplasm. It catalyses the reaction 3-methyl-2-oxobutanoate + (6R)-5,10-methylene-5,6,7,8-tetrahydrofolate + H2O = 2-dehydropantoate + (6S)-5,6,7,8-tetrahydrofolate. It participates in cofactor biosynthesis; (R)-pantothenate biosynthesis; (R)-pantoate from 3-methyl-2-oxobutanoate: step 1/2. Functionally, catalyzes the reversible reaction in which hydroxymethyl group from 5,10-methylenetetrahydrofolate is transferred onto alpha-ketoisovalerate to form ketopantoate. The polypeptide is 3-methyl-2-oxobutanoate hydroxymethyltransferase 1 (Burkholderia cenocepacia (strain HI2424)).